A 121-amino-acid chain; its full sequence is Acidic phospholipase A2 PLA-1 (121 aa).

Cystine bridges form between Cys26/Cys115, Cys28/Cys44, Cys43/Cys95, Cys49/Cys121, Cys50/Cys88, Cys57/Cys81, and Cys75/Cys86. Ca(2+)-binding residues include Tyr27, Gly29, and Gly31. The active site involves His47. A Ca(2+)-binding site is contributed by Asp48. Asp89 is an active-site residue.

It belongs to the phospholipase A2 family. Group II subfamily. D49 sub-subfamily. The cofactor is Ca(2+). Expressed by the venom gland.

Its subcellular location is the secreted. It carries out the reaction a 1,2-diacyl-sn-glycero-3-phosphocholine + H2O = a 1-acyl-sn-glycero-3-phosphocholine + a fatty acid + H(+). Its function is as follows. PLA2 catalyzes the calcium-dependent hydrolysis of the 2-acyl groups in 3-sn-phosphoglycerides. This is Acidic phospholipase A2 PLA-1 from Eristicophis macmahoni (Leaf-nosed viper).